The following is a 365-amino-acid chain: Mitogen-activated protein kinase 13 (365 aa).

A Protein kinase domain is found at 25-308 (YVSPTHVGSG…AAQALTHPFF (284 aa)). 31-39 (VGSGAYGSV) contributes to the ATP binding site. Serine 47 bears the Phosphoserine mark. Lysine 54 serves as a coordination point for ATP. Residue aspartate 150 is the Proton acceptor of the active site. Threonine 180 carries the post-translational modification Phosphothreonine; by MAP2K3, MAP2K4, MAP2K6 and MAP2K7. Positions 180–182 (TGY) match the TXY motif. Position 182 is a phosphotyrosine; by MAP2K3, MAP2K4, MAP2K6 and MAP2K7 (tyrosine 182). Serine 350 carries the phosphoserine modification.

It belongs to the protein kinase superfamily. CMGC Ser/Thr protein kinase family. MAP kinase subfamily. Interacts with MAPK8IP2. Mg(2+) serves as cofactor. In terms of processing, dually phosphorylated on Thr-180 and Tyr-182 by MAP2K3/MKK3, MAP2K4/MKK4, MAP2K6/MKK6 and MAP2K7/MKK7, which activates the enzyme. Dephosphorylated by dual specificity phosphatase DUSP1. As to expression, expressed in testes, pancreas, small intestine, lung and kidney. Abundant in macrophages, also present in neutrophils, CD4+ T-cells, and endothelial cells.

It carries out the reaction L-seryl-[protein] + ATP = O-phospho-L-seryl-[protein] + ADP + H(+). It catalyses the reaction L-threonyl-[protein] + ATP = O-phospho-L-threonyl-[protein] + ADP + H(+). Its activity is regulated as follows. Activated by phosphorylation on threonine and tyrosine by dual specificity kinases, MAP2K3/MKK3, MAP2K6/MKK6, MAP2K4/MKK4 and MAP2K7/MKK7. Activation by ultraviolet radiation, hyperosmotic shock, anisomycin or by TNF-alpha is mediated by MAP2K3/MKK3. Inhibited by dual specificity phosphatase DUSP1. Functionally, serine/threonine kinase which acts as an essential component of the MAP kinase signal transduction pathway. MAPK13 is one of the four p38 MAPKs which play an important role in the cascades of cellular responses evoked by extracellular stimuli such as pro-inflammatory cytokines or physical stress leading to direct activation of transcription factors such as ELK1 and ATF2. Accordingly, p38 MAPKs phosphorylate a broad range of proteins and it has been estimated that they may have approximately 200 to 300 substrates each. MAPK13 is one of the less studied p38 MAPK isoforms. Some of the targets are downstream kinases such as MAPKAPK2, which are activated through phosphorylation and further phosphorylate additional targets. Plays a role in the regulation of protein translation by phosphorylating and inactivating EEF2K. Involved in cytoskeletal remodeling through phosphorylation of MAPT and STMN1. Mediates UV irradiation induced up-regulation of the gene expression of CXCL14. Plays an important role in the regulation of epidermal keratinocyte differentiation, apoptosis and skin tumor development. Phosphorylates the transcriptional activator MYB in response to stress which leads to rapid MYB degradation via a proteasome-dependent pathway. MAPK13 also phosphorylates and down-regulates PRKD1 during regulation of insulin secretion in pancreatic beta cells. The chain is Mitogen-activated protein kinase 13 (MAPK13) from Homo sapiens (Human).